The primary structure comprises 121 residues: Acidic phospholipase A2 SpII RP4 (121 aa).

Cystine bridges form between cysteine 25–cysteine 114, cysteine 27–cysteine 43, cysteine 42–cysteine 94, cysteine 48–cysteine 121, cysteine 49–cysteine 87, cysteine 56–cysteine 80, and cysteine 74–cysteine 85. Residues tyrosine 26, glycine 28, and glycine 30 each contribute to the Ca(2+) site. Histidine 46 is a catalytic residue. Residue aspartate 47 coordinates Ca(2+). The active site involves aspartate 88.

It depends on Ca(2+) as a cofactor. Expressed by the venom gland.

Its subcellular location is the secreted. It catalyses the reaction a 1,2-diacyl-sn-glycero-3-phosphocholine + H2O = a 1-acyl-sn-glycero-3-phosphocholine + a fatty acid + H(+). Functionally, snake venom phospholipase A2 (PLA2) which exhibits indirect hemolysis, induces mild edema inflammation in the foot pads of mice and slightly delays anticoagulant activities. In mice, not lethal, even at the highest dose, and exhibits low to moderate myotoxicity on muscular fibers. PLA2 catalyzes the calcium-dependent hydrolysis of the 2-acyl groups in 3-sn-phosphoglycerides. This is Acidic phospholipase A2 SpII RP4 from Bothrops alternatus (Urutu).